Consider the following 79-residue polypeptide: Conotoxin Vi6.1 (79 aa).

The N-terminal stretch at 1 to 22 is a signal peptide; it reads MKLTCVLIITVLFLTASQLITA. A propeptide spanning residues 23 to 47 is cleaved from the precursor; that stretch reads DYSRDQRQYRAVRLGDEMRNFKGAR. Cystine bridges form between Cys49–Cys62, Cys56–Cys67, and Cys61–Cys77. 2 positions are modified to 4-hydroxyproline: Pro60 and Pro63.

Expressed by the venom duct.

The protein resides in the secreted. In terms of biological role, ion channel inhibitor that inhibits the increase in intracellular calcium upon depolarization in DRG neurons. In vivo, both intraperitoneal and intracranial injections into mice induce hyperactivity. The sequence is that of Conotoxin Vi6.1 from Conus virgo (Virgin cone).